We begin with the raw amino-acid sequence, 1620 residues long: DNA (cytosine-5)-methyltransferase 1 (1620 aa).

The disordered stretch occupies residues 1–21; sequence MPARTAPARVPALASPAGSLP. The interaction with DMAP1 stretch occupies residues 1-120; it reads MPARTAPARV…SRPTWRAEMA (120 aa). An interaction with DNMT3A region spans residues 1–145; the sequence is MPARTAPARV…RRSKSDSDTL (145 aa). Interaction with the PRC2/EED-EZH2 complex stretches follow at residues 1-343 and 305-609; these read MPAR…SERK and APET…RVMG. Ser15 carries the phosphoserine modification. The DMAP1-binding domain maps to 16–109; that stretch reads PAGSLPDHVR…TQKANGCPAN (94 aa). Lys70 is modified (N6,N6-dimethyllysine; by EHMT2). Positions 96 to 369 are disordered; the sequence is THTLTQKANG…PECGQHLDDP (274 aa). Positions 126–137 are enriched in basic residues; the sequence is PRSRPKPRGPRR. Residue Ser138 is modified to Phosphoserine. Lys139 carries the post-translational modification N6-methyllysine; by SETD7. Ser140 carries the post-translational modification Phosphoserine. The span at 144–155 shows a compositional bias: polar residues; the sequence is TLSVETSPSSVA. Phosphoserine; by CK1 is present on Ser146. The segment at 147 to 217 is interaction with DNMT3B; the sequence is VETSPSSVAT…SGAAAAVEKL (71 aa). A phosphoserine mark is found at Ser150 and Ser152. The segment at 161–172 is interaction with PCNA; the sequence is RQTTITAHFTKG. Thr164 carries the phosphothreonine modification. Lys171 is modified (N6-acetyllysine). The short motif at 175–202 is the Nuclear localization signal element; that stretch reads KRKPKEESEEGNSAESAAEERDQDKKRR. The span at 192–205 shows a compositional bias: basic and acidic residues; the sequence is AEERDQDKKRRVVD. Ser240 is modified (phosphoserine). 2 stretches are compositionally biased toward basic and acidic residues: residues 246 to 267 and 286 to 300; these read RELS…PETH and QPRD…KEAE. Lys255 carries the N6-acetyllysine; alternate modification. A Glycyl lysine isopeptide (Lys-Gly) (interchain with G-Cter in SUMO2); alternate cross-link involves residue Lys255. Residues 308–317 show a composition bias toward acidic residues; it reads TPEDRDEDER. Residues 328-556 are DNA replication foci-targeting sequence; it reads KLESHTVPVQ…NVNRFTEDSL (229 aa). Zn(2+)-binding residues include Cys359 and Cys362. Residue Lys372 is modified to N6-acetyllysine. Positions 420 and 424 each coordinate Zn(2+). 2 positions are modified to phosphoserine: Ser515 and Ser555. A CXXC-type zinc finger spans residues 649–695; sequence NAMKRRRCGVCEVCQQPECGKCKACKDMVKFGGTGRSKQACLKRRCP. Positions 656, 659, 662, 667, 670, 673, 689, and 694 each coordinate Zn(2+). Residues 696–757 are autoinhibitory linker; sequence NLAVKEADDD…TYYQKVSIDE (62 aa). The interaction with HDAC1 stretch occupies residues 696 to 813; the sequence is NLAVKEADDD…TDTVLGATSD (118 aa). Residues 702-713 show a composition bias toward acidic residues; the sequence is ADDDEEADDDVS. The segment at 702-732 is disordered; that stretch reads ADDDEEADDDVSEMPSPKKLHQGKKKKQNKD. Phosphoserine is present on residues Ser713 and Ser717. Residues 719–730 are compositionally biased toward basic residues; that stretch reads KKLHQGKKKKQN. Phosphoserine is present on Ser735. Lys752 is modified (N6-acetyllysine). The BAH 1 domain occupies 758 to 884; sequence EMLEVGDCVS…QEYARFESPP (127 aa). Ser882 carries the post-translational modification Phosphoserine. 4 positions are modified to N6-acetyllysine: Lys895, Lys961, Lys965, and Lys979. A BAH 2 domain is found at 976–1103; the sequence is HYRKYSDYIK…SKTKNFEDPP (128 aa). Positions 1097-1136 are disordered; it reads KNFEDPPNHARSPGNKGKGKGKGKGKGKHQVSEPKEPEAA. Repeat copies occupy residues 1112–1113, 1114–1115, 1116–1117, 1118–1119, 1120–1121, and 1122–1123. A 7 X 2 AA tandem repeats of K-G region spans residues 1112–1125; sequence KGKGKGKGKGKGKH. Positions 1113-1125 are enriched in basic residues; the sequence is GKGKGKGKGKGKH. Lys1114, Lys1116, Lys1118, Lys1120, Lys1122, and Lys1124 each carry N6-acetyllysine. A 7; approximate repeat occupies 1124–1125; the sequence is KH. The interaction with the PRC2/EED-EZH2 complex stretch occupies residues 1124–1620; sequence KHQVSEPKEP…KAKEEAATKD (497 aa). Basic and acidic residues predominate over residues 1126–1135; the sequence is QVSEPKEPEA. Residues 1142-1601 form the SAM-dependent MTase C5-type domain; it reads LRTLDVFSGC…LEIKLCLLSS (460 aa). A catalytic region spans residues 1142–1620; it reads LRTLDVFSGC…KAKEEAATKD (479 aa). S-adenosyl-L-methionine-binding positions include Ser1149, 1153–1154, 1171–1172, and 1193–1194; these read GL, EM, and DC. Residue Cys1229 is part of the active site. N6-acetyllysine occurs at positions 1352 and 1418. Position 1582 (Val1582) interacts with S-adenosyl-L-methionine. Lys1611 participates in a covalent cross-link: Glycyl lysine isopeptide (Lys-Gly) (interchain with G-Cter in SUMO2).

Belongs to the class I-like SAM-binding methyltransferase superfamily. C5-methyltransferase family. As to quaternary structure, homodimer. Forms a stable complex with E2F1, BB1 and HDAC1. Forms a complex with DMAP1 and HDAC2, with direct interaction. Interacts with the PRC2/EED-EZH2 complex. Probably part of a corepressor complex containing ZNF304, TRIM28, SETDB1 and DNMT1. Interacts with UHRF1; promoting its recruitment to hemimethylated DNA. Interacts with USP7, promoting its deubiquitination. Interacts with BAZ2A/TIP5. Interacts with PCNA. Interacts with MBD2 and MBD3. Interacts with DNMT3A and DNMT3B. Interacts with UBC9. Interacts with HDAC1. Interacts with CSNK1D. Interacts with SIRT7. Interacts with ZNF263; recruited to the SIX3 promoter along with other proteins involved in chromatin modification and transcriptional corepression where it contributes to transcriptional repression. Interacts with L3MBTL3 and DCAF5; the interaction requires DNMT1 methylation at Lys-139 and is necessary to target DNMT1 for ubiquitination by the CRL4-DCAF5 E3 ubiquitin ligase complex and proteasomal degradation. Interacts with PHF20L1; the interaction requires DNMT1 methylation at Lys-139 and protects DNMT1 from ubiquitination and proteasomal degradation. Post-translationally, sumoylated; sumoylation increases activity. Phosphorylation at Ser-146 by CK1 reduces DNA-binding activity. In terms of processing, acetylation on multiple lysines, mainly by KAT2B/PCAF, regulates cell cycle G(2)/M transition. Deacetylation of Lys-1352 and Lys-1418 by SIRT1 increases methyltransferase activity. Post-translationally, phosphorylation of Ser-152 by CDKs is important for enzymatic activity and protein stability. Phosphorylation of Ser-140 by AKT1 prevents methylation by SETD7 thereby increasing DNMT1 stability. Methylation at Lys-139 by SETD7 is necessary for the regulation of DNMT1 proteasomal degradation. In terms of processing, ubiquitinated by UHRF1; interaction with USP7 counteracts ubiquitination by UHRF1 by promoting deubiquitination and preventing degradation by the proteasome. Isoform 1 is expressed in embryonic stem cells and in somatic tissues. Isoform 2 is expressed in oocytes, preimplantation embryos, testis and in skeletal muscle during myogenesis.

It localises to the nucleus. Its subcellular location is the cytoplasm. It catalyses the reaction a 2'-deoxycytidine in DNA + S-adenosyl-L-methionine = a 5-methyl-2'-deoxycytidine in DNA + S-adenosyl-L-homocysteine + H(+). Allosterically regulated. The binding of 5-methylcytosine-containing DNA to the N-terminal parts of DNMT1 causes an allosteric activation of the catalytic domain by a direct interaction of its Zn-binding domain with the catalytic domain. Its function is as follows. Methylates CpG residues. Preferentially methylates hemimethylated DNA. Associates with DNA replication sites in S phase maintaining the methylation pattern in the newly synthesized strand, that is essential for epigenetic inheritance. Associates with chromatin during G2 and M phases to maintain DNA methylation independently of replication. It is responsible for maintaining methylation patterns established in development. DNA methylation is coordinated with methylation of histones. Mediates transcriptional repression by direct binding to HDAC2. In association with DNMT3B and via the recruitment of CTCFL/BORIS, involved in activation of BAG1 gene expression by modulating dimethylation of promoter histone H3 at H3K4 and H3K9. Probably forms a corepressor complex required for activated KRAS-mediated promoter hypermethylation and transcriptional silencing of tumor suppressor genes (TSGs) or other tumor-related genes in colorectal cancer (CRC) cells. Also required to maintain a transcriptionally repressive state of genes in undifferentiated embryonic stem cells (ESCs). Associates at promoter regions of tumor suppressor genes (TSGs) leading to their gene silencing. Promotes tumor growth. This Mus musculus (Mouse) protein is DNA (cytosine-5)-methyltransferase 1 (Dnmt1).